The sequence spans 137 residues: Putative pre-16S rRNA nuclease (137 aa).

Belongs to the YqgF nuclease family.

The protein resides in the cytoplasm. In terms of biological role, could be a nuclease involved in processing of the 5'-end of pre-16S rRNA. In Clostridium perfringens (strain ATCC 13124 / DSM 756 / JCM 1290 / NCIMB 6125 / NCTC 8237 / Type A), this protein is Putative pre-16S rRNA nuclease.